Reading from the N-terminus, the 80-residue chain is Lantibiotic Flvalpha.b (80 aa).

The propeptide at 1 to 38 is cleaved by FlvT; sequence MNKNPIYRSEEEAKNIACGNVAAELDENSQALDAINGA. Residues Thr-43 and Thr-47 each carry the 2,3-didehydrobutyrine; by FlvM1 modification. Residues 52–55 constitute a cross-link (beta-methyllanthionine (Thr-Cys); by FlvM1); the sequence is TVGC. Positions 58-68 form a cross-link, lanthionine (Ser-Cys); by FlvM1; the sequence is SYGLGNGGYCC. 2 consecutive cross-links (beta-methyllanthionine (Thr-Cys); by FlvM1) follow at residues 69 to 74 and 71 to 78; these read TYTVEC and TVECSKTC.

The lanthionine formed by Ser-58 and Cys-68 forms a putative lipid II binding motif. Post-translationally, maturation of FlvA1 peptides involves the enzymatic conversion of Thr, and Ser into dehydrated AA and the formation of thioether bonds with cysteines. Modifications are processed by the flavecin synthetase FlvM1. This is followed by membrane translocation and cleavage of the modified precursor. In terms of processing, contains DL-lanthionine and DL-beta-methyllanthionine, when coepressed in E.coli with the flavecin synthetase FlvM1.

It is found in the secreted. Functionally, lanthionine-containing peptide antibiotic (lantibiotic) only active on Gram-positive bacteria in synergy with Flvbeta peptides, which are encoded by the same operon than Flvalpha.a. Shows antibacterial activity in synergy with Flvbeta.b, Flvbeta.c, Flvbeta.e and Flvbeta.g. Does not show antibacterial activity when tested with Flvbeta.a, Flvbeta.d, Flvbeta.f and Flvbeta.h. The bactericidal activity of lantibiotics is based on depolarization of energized bacterial cytoplasmic membranes, initiated by the formation of aqueous transmembrane pores. The protein is Lantibiotic Flvalpha.b of Ruminococcus flavefaciens.